We begin with the raw amino-acid sequence, 264 residues long: Methylthioribulose-1-phosphate dehydratase (264 aa).

Cysteine 110 is a substrate binding site. The Zn(2+) site is built by histidine 128 and histidine 130. Glutamate 151 serves as the catalytic Proton donor/acceptor. A Zn(2+)-binding site is contributed by histidine 213.

Belongs to the aldolase class II family. MtnB subfamily. The cofactor is Zn(2+).

The protein localises to the cytoplasm. The catalysed reaction is 5-(methylsulfanyl)-D-ribulose 1-phosphate = 5-methylsulfanyl-2,3-dioxopentyl phosphate + H2O. The protein operates within amino-acid biosynthesis; L-methionine biosynthesis via salvage pathway; L-methionine from S-methyl-5-thio-alpha-D-ribose 1-phosphate: step 2/6. Its function is as follows. Catalyzes the dehydration of methylthioribulose-1-phosphate (MTRu-1-P) into 2,3-diketo-5-methylthiopentyl-1-phosphate (DK-MTP-1-P). The sequence is that of Methylthioribulose-1-phosphate dehydratase from Vanderwaltozyma polyspora (strain ATCC 22028 / DSM 70294 / BCRC 21397 / CBS 2163 / NBRC 10782 / NRRL Y-8283 / UCD 57-17) (Kluyveromyces polysporus).